We begin with the raw amino-acid sequence, 368 residues long: MTVTGIIAEFNPFHNGHKYLLETAEGLKIIAMSGNFMQRGEPALIDKWIRSEMALKNGADIVVELPFFVSVQSADYFAQGAIDILCQLGIQQLAFGTENVIDYQKLIKVYEKKSEQMTAYLSTLEDTLSYPQKTQKMWEIFAGVKFSGQTPNHILGLSYAKASAGKHIQLCPIKRQGAAYHSKDKNHLLASASAIRQHLNDWDFISHSVPNAGLLINNPHMSWDHYFSFLKYQILNHSDLTSIFQVNDELASRIKKAIKVSQNIDHLVDTVATKRYTKSRVRRILTYILVNAKEPTLPKGIHILGFTSKGQAHLKKLKKSRPLITRIGAETWDEMTQKADSIYQLGHQDIPEQSFGRIPIIIKNERLN.

Residues 7–20, Gly-96, Asn-152, and Arg-175 contribute to the ATP site; that span reads IAEF…HKYL.

The protein belongs to the TmcAL family.

It is found in the cytoplasm. It carries out the reaction cytidine(34) in elongator tRNA(Met) + acetate + ATP = N(4)-acetylcytidine(34) in elongator tRNA(Met) + AMP + diphosphate. Its function is as follows. Catalyzes the formation of N(4)-acetylcytidine (ac(4)C) at the wobble position of elongator tRNA(Met), using acetate and ATP as substrates. First activates an acetate ion to form acetyladenylate (Ac-AMP) and then transfers the acetyl group to tRNA to form ac(4)C34. The protein is tRNA(Met) cytidine acetate ligase of Streptococcus pyogenes serotype M49 (strain NZ131).